The sequence spans 1007 residues: Serine/threonine-protein kinase PRP4 homolog (1007 aa).

Polar residues predominate over residues 1–10 (MAAAETQSLR). A disordered region spans residues 1-99 (MAAAETQSLR…EGMSPAKRTK (99 aa)). At alanine 2 the chain carries N-acetylalanine. 4 positions are modified to phosphoserine: serine 8, serine 20, serine 23, and serine 32. 2 stretches are compositionally biased toward basic residues: residues 39-59 (KHSR…KHKH) and 67-81 (KKHK…HKRK). The segment covering 82–91 (EVIDASDKEG) has biased composition (basic and acidic residues). 2 positions are modified to phosphoserine: serine 87 and serine 93. Lysine 99 bears the N6-acetyllysine; alternate mark. Lysine 99 participates in a covalent cross-link: Glycyl lysine isopeptide (Lys-Gly) (interchain with G-Cter in SUMO2); alternate. Lysine 111 is covalently cross-linked (Glycyl lysine isopeptide (Lys-Gly) (interchain with G-Cter in SUMO2)). Lysine 117 participates in a covalent cross-link: Glycyl lysine isopeptide (Lys-Gly) (interchain with G-Cter in SUMO2); alternate. Lysine 117 is covalently cross-linked (Glycyl lysine isopeptide (Lys-Gly) (interchain with G-Cter in SUMO1); alternate). Serine 131 is modified (phosphoserine). The residue at position 140 (tyrosine 140) is a Phosphotyrosine. Disordered stretches follow at residues 140–533 (YESG…EEED) and 559–583 (SNMS…SPDD). Phosphoserine is present on residues serine 142, serine 144, and serine 166. Low complexity predominate over residues 157 to 168 (GNRSSTRSSSTK). Glycyl lysine isopeptide (Lys-Gly) (interchain with G-Cter in SUMO2) cross-links involve residues lysine 170 and lysine 177. Basic residues-rich tracts occupy residues 179–202 (TTKK…KKSK) and 214–230 (RSKS…SKRS). Phosphoserine occurs at positions 239, 241, 257, 277, 283, 292, and 294. A compositionally biased stretch (basic and acidic residues) spans 247–270 (RSQEKIGKARSPTDDKVKIEDKSK). Over residues 302–315 (SKDRRSRSKERKSK) the composition is skewed to basic residues. Over residues 316–325 (RSETDKEKKP) the composition is skewed to basic and acidic residues. Phosphoserine occurs at positions 328, 354, 356, 366, and 368. Positions 342 to 367 (PSRRPGRSPKRRSLSPKPRDKSRRSR) are enriched in basic residues. Threonine 385 is modified (phosphothreonine). Position 387 is a phosphoserine (serine 387). Basic and acidic residues-rich tracts occupy residues 395–408 (RSLE…ERRR) and 415–429 (RPRD…RSKD). 3 positions are modified to phosphoserine: serine 427, serine 431, and serine 437. Residues 438 to 497 (PTRRRSRSPIRRRSRSPLRRSRSPRRRSRSPRRRDRGRRSRSRLRRRSRSRGGRRRRSRS) are compositionally biased toward basic residues. A phosphoserine mark is found at serine 518, serine 519, serine 520, serine 565, serine 569, serine 578, and serine 580. Residues 518–533 (SSSDDNLEDFDVEEED) are compositionally biased toward acidic residues. Residues 562–581 (SVPSEPSSPQSSTRTRSPSP) are compositionally biased toward low complexity. Residues lysine 593 and lysine 659 each participate in a glycyl lysine isopeptide (Lys-Gly) (interchain with G-Cter in SUMO2) cross-link. The region spanning 687–1003 (YNVYGYTGQG…INQALQHAFI (317 aa)) is the Protein kinase domain. Residues 693-701 (TGQGVFSNV) and lysine 717 each bind ATP. Residue lysine 717 is modified to N6-acetyllysine. Aspartate 815 functions as the Proton acceptor in the catalytic mechanism. Tyrosine 849 is subject to Phosphotyrosine. Phosphoserine is present on serine 852.

Belongs to the protein kinase superfamily. CMGC Ser/Thr protein kinase family. In terms of assembly, interacts with CLK1 C-terminus. Associates with the U5 snRNP and NCOR1 deacetylase complexes. Identified in the spliceosome C complex. In terms of processing, phosphorylated by CLK1. Autophosphorylated; phosphorylation inhibits interaction with its targets, such as PRPF6 or SMARCA4.

The protein resides in the nucleus. The protein localises to the chromosome. It is found in the centromere. It localises to the kinetochore. It carries out the reaction L-seryl-[protein] + ATP = O-phospho-L-seryl-[protein] + ADP + H(+). It catalyses the reaction L-threonyl-[protein] + ATP = O-phospho-L-threonyl-[protein] + ADP + H(+). Serine/threonine kinase involved in spliceosomal assembly as well as mitosis and signaling regulation. Connects chromatin mediated regulation of transcription and pre-mRNA splicing. During spliceosomal assembly, interacts with and phosphorylates PRPF6 and PRPF31, components of the U4/U6-U5 tri-small nuclear ribonucleoprotein (snRNP), to facilitate the formation of the spliceosome B complex. Plays a role in regulating transcription and the spindle assembly checkpoint (SAC). Associates with U5 snRNP and NCOR1 deacetylase complexes which may allow a coordination of pre-mRNA splicing with chromatin remodeling events involved in transcriptional regulation. Associates and probably phosphorylates SMARCA4 and NCOR1. Phosphorylates SRSF1. Associates with kinetochores during mitosis and is necessary for recruitment and maintenance of the checkpoint proteins such as MAD1L1 and MAD12L1 at the kinetochores. Phosphorylates and regulates the activity of the transcription factors such as ELK1 and KLF13. Phosphorylates nuclear YAP1 and WWTR1/TAZ which induces nuclear exclusion and regulates Hippo signaling pathway, involved in tissue growth control. The chain is Serine/threonine-protein kinase PRP4 homolog (PRP4K) from Pongo abelii (Sumatran orangutan).